Reading from the N-terminus, the 295-residue chain is Peptide transport system permease protein SapC (295 aa).

A run of 6 helical transmembrane segments spans residues 27 to 47, 102 to 122, 129 to 149, 157 to 177, 219 to 239, and 262 to 282; these read IALFSFYLLIALIFTALFASY, LLVVFSVAIIGGALGIIAGLL, FVGHIFDAFLSLPILLIAVVI, LWNAMFATLLAILPYFIHTIY, VARAFVIAVLDISALSFISLG, and PWTVLLPGFAIIFTILLSIIF. Residues 98–278 form the ABC transmembrane type-1 domain; sequence LGSALLVVFS…GFAIIFTILL (181 aa).

This sequence belongs to the binding-protein-dependent transport system permease family. OppBC subfamily.

It localises to the cell inner membrane. Its function is as follows. Involved in a peptide intake transport system that plays a role in the resistance to antimicrobial peptides. The protein is Peptide transport system permease protein SapC (sapC) of Haemophilus influenzae (strain ATCC 51907 / DSM 11121 / KW20 / Rd).